A 236-amino-acid chain; its full sequence is NAD-dependent protein deacetylase (236 aa).

A Deacetylase sirtuin-type domain is found at 1–236; that stretch reads MIKDWLQESN…EFLRSISNEG (236 aa). The NAD(+) site is built by Ala18, Thr22, Phe29, Arg30, Gln96, Val98, Asp99, and His114. Residue Phe29 coordinates nicotinamide. Positions 98 and 99 each coordinate nicotinamide. His114 acts as the Proton acceptor in catalysis. Zn(2+) is bound by residues Cys122, Cys125, Cys141, and Cys143. Ser181, Ser182, Asn206, and Ile225 together coordinate NAD(+).

It belongs to the sirtuin family. Class U subfamily. It depends on Zn(2+) as a cofactor.

The protein localises to the cytoplasm. The catalysed reaction is N(6)-acetyl-L-lysyl-[protein] + NAD(+) + H2O = 2''-O-acetyl-ADP-D-ribose + nicotinamide + L-lysyl-[protein]. Its function is as follows. NAD-dependent protein deacetylase which modulates the activities of several enzymes which are inactive in their acetylated form. The sequence is that of NAD-dependent protein deacetylase from Oceanobacillus iheyensis (strain DSM 14371 / CIP 107618 / JCM 11309 / KCTC 3954 / HTE831).